Reading from the N-terminus, the 493-residue chain is Cobyric acid synthase (493 aa).

The 195-residue stretch at 246–440 folds into the GATase cobBQ-type domain; the sequence is PIDIAVIKMP…IHGVFDGVVF (195 aa). Cys326 serves as the catalytic Nucleophile. His432 is a catalytic residue.

This sequence belongs to the CobB/CobQ family. CobQ subfamily.

It participates in cofactor biosynthesis; adenosylcobalamin biosynthesis. Catalyzes amidations at positions B, D, E, and G on adenosylcobyrinic A,C-diamide. NH(2) groups are provided by glutamine, and one molecule of ATP is hydrogenolyzed for each amidation. This is Cobyric acid synthase from Clostridium botulinum (strain Kyoto / Type A2).